Here is an 890-residue protein sequence, read N- to C-terminus: DNA mismatch repair protein MutS (890 aa).

An ATP-binding site is contributed by 646–653; it reads GPNMAGKS.

Belongs to the DNA mismatch repair MutS family.

In terms of biological role, this protein is involved in the repair of mismatches in DNA. It is possible that it carries out the mismatch recognition step. This protein has a weak ATPase activity. The protein is DNA mismatch repair protein MutS of Hyphomonas neptunium (strain ATCC 15444).